A 520-amino-acid chain; its full sequence is Cytosol aminopeptidase (520 aa).

Zn(2+) is bound by residues Leu-200, Met-201, Lys-280, and Asp-285. The substrate site is built by Lys-280, Asp-285, Ser-290, and Lys-292. A Mg(2+)-binding site is contributed by Asp-285. Lys-292 is an active-site residue. Zn(2+) is bound by residues Arg-301, Asp-303, Asp-362, and Glu-364. Substrate contacts are provided by Asp-303 and Asp-362. Mg(2+) contacts are provided by Asp-362 and Glu-364. The active site involves Arg-366.

Belongs to the peptidase M17 family. Homohexamer. Requires Zn(2+) as cofactor. It depends on Mn(2+) as a cofactor.

The protein localises to the cytoplasm. It carries out the reaction Release of an N-terminal amino acid, Xaa-|-Yaa-, in which Xaa is preferably Leu, but may be other amino acids including Pro although not Arg or Lys, and Yaa may be Pro. Amino acid amides and methyl esters are also readily hydrolyzed, but rates on arylamides are exceedingly low.. It catalyses the reaction an S-substituted L-cysteinylglycine + H2O = an S-substituted L-cysteine + glycine. The enzyme catalyses L-cysteinylglycine + H2O = L-cysteine + glycine. The catalysed reaction is S-benzyl-L-cysteinylglycine + H2O = S-benzyl-L-cysteine + glycine. It carries out the reaction Release of N-terminal proline from a peptide.. In terms of biological role, cytosolic metallopeptidase that catalyzes the removal of unsubstituted N-terminal hydrophobic amino acids from various peptides. The presence of Zn(2+) ions is essential for the peptidase activity, and the association with other cofactors can modulate the substrate spectificity of the enzyme. For instance, in the presence of Mn(2+), it displays a specific Cys-Gly hydrolyzing activity of Cys-Gly-S-conjugates. Involved in the metabolism of glutathione and in the degradation of glutathione S-conjugates, which may play a role in the control of the cell redox status. This is Cytosol aminopeptidase (lap3) from Xenopus tropicalis (Western clawed frog).